A 396-amino-acid polypeptide reads, in one-letter code: Elongation factor Tu (396 aa).

In terms of domain architecture, tr-type G spans 10–206 (KPHCNIGTIG…AVDSYIPQPE (197 aa)). The segment at 19-26 (GHVDHGKT) is G1. Position 19 to 26 (19 to 26 (GHVDHGKT)) interacts with GTP. Thr26 provides a ligand contact to Mg(2+). Residues 60–64 (GITIS) are G2. The segment at 81 to 84 (DCPG) is G3. GTP contacts are provided by residues 81–85 (DCPGH) and 136–139 (NKVD). The G4 stretch occupies residues 136-139 (NKVD). Residues 174–176 (SAV) are G5.

It belongs to the TRAFAC class translation factor GTPase superfamily. Classic translation factor GTPase family. EF-Tu/EF-1A subfamily. In terms of assembly, monomer.

Its subcellular location is the cytoplasm. It carries out the reaction GTP + H2O = GDP + phosphate + H(+). Functionally, GTP hydrolase that promotes the GTP-dependent binding of aminoacyl-tRNA to the A-site of ribosomes during protein biosynthesis. The protein is Elongation factor Tu of Rhizorhabdus wittichii (strain DSM 6014 / CCUG 31198 / JCM 15750 / NBRC 105917 / EY 4224 / RW1) (Sphingomonas wittichii).